The primary structure comprises 101 residues: Putative RNA-binding protein RbpA (101 aa).

The 78-residue stretch at 2–79 folds into the RRM domain; the sequence is SIYVGNLSYD…RDLKVNKAKP (78 aa). Positions 73 to 83 are enriched in basic and acidic residues; sequence KVNKAKPRENR. The interval 73–101 is disordered; it reads KVNKAKPRENRSGGGSFGGGRKSYGGSRY. Gly residues predominate over residues 84-101; sequence SGGGSFGGGRKSYGGSRY.

This Synechocystis sp. (strain ATCC 27184 / PCC 6803 / Kazusa) protein is Putative RNA-binding protein RbpA (rbpA).